A 582-amino-acid polypeptide reads, in one-letter code: Vesicular glutamate transporter 2 (582 aa).

The Cytoplasmic segment spans residues 1-71 (MESVKQRILA…CTCFGLPRRY (71 aa)). A helical membrane pass occupies residues 72 to 92 (IIAIMSGLGFCISFGIRCNLG). Residues 93 to 125 (VAIVDMVNNSTIHRGGKVIKEKAKFNWDPETVG) are Vesicular-facing. Asparagine 100 and asparagine 101 each carry an N-linked (GlcNAc...) asparagine glycan. Residues 126-146 (MIHGSFFWGYIITQIPGGYIA) form a helical membrane-spanning segment. Residues 147–148 (SR) lie on the Cytoplasmic side of the membrane. Residues 149–169 (LAANRVFGAAILLTSTLNMLI) form a helical membrane-spanning segment. Over 170–177 (PSAARVHY) the chain is Vesicular. A helical transmembrane segment spans residues 178-198 (GCVIFVRILQGLVEGVTYPAC). Residues 199 to 216 (HGIWSKWAPPLERSRLAT) lie on the Cytoplasmic side of the membrane. The helical transmembrane segment at 217–237 (TSFCGSYAGAVIAMPLAGILV) threads the bilayer. Residues 238-244 (QYTGWSS) lie on the Vesicular side of the membrane. The chain crosses the membrane as a helical span at residues 245–265 (VFYVYGSFGMVWYMFWLLVSY). Residues 266–310 (ESPAKHPTITDEERRYIEESIGESANLLGAMEKFKTPWRKFFTSM) are Cytoplasmic-facing. A helical membrane pass occupies residues 311 to 331 (PVYAIIVANFCRSWTFYLLLI). Over 332 to 349 (SQPAYFEEVFGFEISKVG) the chain is Vesicular. Residues 350–370 (MLSAVPHLVMTIIVPIGGQIA) form a helical membrane-spanning segment. Residues 371-386 (DFLRSKQILSTTTVRK) are Cytoplasmic-facing. The helical transmembrane segment at 387-407 (IMNCGGFGMEATLLLVVGYSH) threads the bilayer. The Vesicular segment spans residues 408-409 (TR). Residues 410-430 (GVAISFLVLAVGFSGFAISGF) traverse the membrane as a helical segment. Over 431–443 (NVNHLDIAPRYAS) the chain is Cytoplasmic. Residues 444–464 (ILMGISDGVGTLSGMVCPIIV) form a helical membrane-spanning segment. The Vesicular segment spans residues 465-477 (GAMTKNKSREEWQ). Asparagine 470 carries an N-linked (GlcNAc...) asparagine glycan. Residues 478 to 498 (YVFLIAALVHYGGVIFYALFA) form a helical membrane-spanning segment. The Cytoplasmic portion of the chain corresponds to 499 to 582 (SGEKQPWADP…YTYKDRDDYS (84 aa)).

Belongs to the major facilitator superfamily. Sodium/anion cotransporter family. VGLUT subfamily. Expressed in brain. Expressed in hippocampal neurons (at protein level).

It is found in the cytoplasmic vesicle. The protein localises to the secretory vesicle. The protein resides in the synaptic vesicle membrane. Its subcellular location is the synapse. It localises to the synaptosome. It is found in the cell membrane. It catalyses the reaction L-glutamate(out) = L-glutamate(in). The enzyme catalyses K(+)(in) + H(+)(out) = K(+)(out) + H(+)(in). It carries out the reaction 3 Na(+)(out) + phosphate(out) = 3 Na(+)(in) + phosphate(in). The catalysed reaction is phosphate(in) = phosphate(out). It catalyses the reaction chloride(in) = chloride(out). Chloride channel activity is allosterically activated by lumenal H(+) and Cl(-) leading to synaptic vesicles acidification. The L-glutamate transport activity is allosterically activated by lumenal H(+) and Cl(-). The allosteric requirement for H(+) efficiently prevents non-vesicular efflux across the plasma membrane. The L-glutamate uniporter activity exhibits a biphasic dependence on chloride concentration. Functionally, multifunctional transporter that transports L-glutamate as well as multiple ions such as chloride, proton, potassium, sodium and phosphate. At the synaptic vesicle membrane, mainly functions as a uniporter which transports preferentially L-glutamate but also, phosphate from the cytoplasm into synaptic vesicles at presynaptic nerve terminals of excitatory neural cells. The L-glutamate or phosphate uniporter activity is electrogenic and is driven by the proton electrochemical gradient, mainly by the electrical gradient established by the vacuolar H(+)-ATPase across the synaptic vesicle membrane. In addition, functions as a chloride channel that allows a chloride permeation through the synaptic vesicle membrane therefore affects the proton electrochemical gradient and promotes synaptic vesicles acidification. Moreover, functions as a vesicular K(+)/H(+) antiport allowing to maintain the electrical gradient and to decrease chemical gradient and therefore sustain vesicular glutamate uptake. The vesicular H(+)/H(+) antiport activity is electroneutral. At the plasma membrane, following exocytosis, functions as a symporter of Na(+) and phosphate from the extracellular space to the cytoplasm allowing synaptic phosphate homeostasis regulation. The symporter activity is driven by an inside negative membrane potential and is electrogenic. Also involved in the regulation of retinal hyaloid vessel regression during postnatal development. May also play a role in the endocrine glutamatergic system of other tissues such as pineal gland and pancreas. This Mus musculus (Mouse) protein is Vesicular glutamate transporter 2.